A 732-amino-acid polypeptide reads, in one-letter code: MAWSGNKAAVVLCVDVGVAMGNSFPGEESPIEQAKKVMTMFVQRQVFSESKDEIALVLYGTDGTDNALAGKDQYQNITVCRHLMLPDFDLLEDIGNKIQPSSQQADFLDALIVCMDLIQRETIGKKFGKKHIEVFTDLSSPFSQDQLDVIICNLKKSGISLQFFLPFPIDKNGEPGERGDLDSGLDHLKPSFPQKGLTEQQKEGIRMVTRVMLSLEGEDGLDEIYSFSESLRQLCVFKKIERRSMPWPCQLTIGPNLSIKIVAYKSIVQEKFKKSWVVVDARTLKKEDIQKETVYCLNDDDETEVSKEDTIQGYRYGSDIIPFSKVDEEQMKYKSEGKCFSVLGFCKSSQVHRRFFMGHQVLKVFAAKDDEAAAVALSSLVHALDELNMVAIVRYAYDKRSNPQVGVAFPYIKDAYECLVYVQLPFMEDLRQYMFSSLKNNKKCTPTEAQLSAIDDLIDSMSLVKKNEEEDIVEDLFPTSKIPNPEFQRLYQCLLHRALHLQERLPPIQQHILNMLDPPTEMKAKCESPLSKVKTLFPLTEVIKKKNQVTAQDVFQDNHEEGPAAKKYKTEKEEDHISISSLAEGNITKVGSVNPVENFRFLVRQKIASFEEASLQLISHIEQFLDTNETLYFMKSMDCIKAFREEAIQFSEEQRFNSFLEALREKVEIKQLNHFWEIVVQDGVTLITKDEGPGSSITAEEATKFLAPKDKAKEDTTGPEEAGDVDDLLDMI.

Positions A9–L161 constitute a VWFA domain. Residues L138–L165 are leucine-zipper. Residue K195 forms a Glycyl lysine isopeptide (Lys-Gly) (interchain with G-Cter in SUMO2) linkage. Positions I253–A453 constitute a Ku domain. Phosphoserine is present on S258. An N6-acetyllysine modification is found at K265. S318 is modified (phosphoserine). At K332 the chain carries N6-acetyllysine. Residues K532 and K534 each participate in a glycyl lysine isopeptide (Lys-Gly) (interchain with G-Cter in SUMO2) cross-link. A Phosphothreonine modification is found at T535. Glycyl lysine isopeptide (Lys-Gly) (interchain with G-Cter in SUMO2) cross-links involve residues K567 and K569. Phosphoserine; by PRKDC occurs at positions 578, 580, and 581. The residue at position 666 (K666) is an N6-acetyllysine. Residues K670 and K689 each participate in a glycyl lysine isopeptide (Lys-Gly) (interchain with G-Cter in SUMO2) cross-link. The disordered stretch occupies residues P708–I732. Phosphothreonine; by PRKDC is present on T716. Residues T717–I732 are compositionally biased toward acidic residues. An EEXXXDL motif motif is present at residues E720–L728.

Belongs to the ku80 family. In terms of assembly, heterodimer composed of XRCC5/Ku80 and XRCC6/Ku70. Component of the core long-range non-homologous end joining (NHEJ) complex (also named DNA-PK complex) composed of PRKDC, LIG4, XRCC4, XRCC6/Ku70, XRCC5/Ku86 and NHEJ1/XLF. Additional component of the NHEJ complex includes PAXX. Following autophosphorylation, PRKDC dissociates from DNA, leading to formation of the short-range NHEJ complex, composed of LIG4, XRCC4, XRCC6/Ku70, XRCC5/Ku86 and NHEJ1/XLF. The XRCC5-XRCC6 dimer also associates with NAA15, and this complex displays DNA binding activity towards the osteocalcin FGF response element (OCFRE). In addition, XRCC5 binds to the osteoblast-specific transcription factors MSX2 and RUNX2. Interacts with ELF3. Interacts with APLF (via KBM motif). The XRCC5/XRCC6 dimer associates in a DNA-dependent manner with APEX1. Identified in a complex with DEAF1 and XRCC6. Interacts with NR4A3; the DNA-dependent protein kinase complex DNA-PK phosphorylates and activates NR4A3 and prevents NR4A3 ubiquitinylation and degradation. Interacts with RNF138. Interacts with CYREN (via KBM motif). Interacts with WRN (via KBM motif). Interacts (via N-terminus) with HSF1 (via N-terminus); this interaction is direct and prevents XRCC5/XRCC6 heterodimeric binding and non-homologous end joining (NHEJ) repair activities induced by ionizing radiation (IR). Interacts with DHX9; this interaction occurs in a RNA-dependent manner. Part of the HDP-RNP complex composed of at least HEXIM1, PRKDC, XRCC5, XRCC6, paraspeckle proteins (SFPQ, NONO, PSPC1, RBM14, and MATR3) and NEAT1 RNA. Interacts with ERCC6. Interacts with ATF7. The XRCC5-XRCC6 dimer associates with ALKBH2. Interacts with TPRN; TPRN interacts with a number of DNA damage response proteins, is recruited to sites of DNA damage and may play a role in DNA damage repair. Interacts with ERCC6L2. In terms of processing, ADP-ribosylated by PARP3. Phosphorylated on serine residues. Phosphorylation by PRKDC may enhance helicase activity. Post-translationally, sumoylated. In terms of processing, ubiquitinated by RNF8 via 'Lys-48'-linked ubiquitination following DNA damage, leading to its degradation and removal from DNA damage sites. Ubiquitinated by RNF138, leading to remove the Ku complex from DNA breaks.

The protein resides in the nucleus. Its subcellular location is the nucleolus. The protein localises to the chromosome. Single-stranded DNA-dependent ATP-dependent helicase that plays a key role in DNA non-homologous end joining (NHEJ) by recruiting DNA-PK to DNA. Required for double-strand break repair and V(D)J recombination. Also has a role in chromosome translocation. The DNA helicase II complex binds preferentially to fork-like ends of double-stranded DNA in a cell cycle-dependent manner. It works in the 3'-5' direction. During NHEJ, the XRCC5-XRRC6 dimer performs the recognition step: it recognizes and binds to the broken ends of the DNA and protects them from further resection. Binding to DNA may be mediated by XRCC6. The XRCC5-XRRC6 dimer acts as a regulatory subunit of the DNA-dependent protein kinase complex DNA-PK by increasing the affinity of the catalytic subunit PRKDC to DNA by 100-fold. The XRCC5-XRRC6 dimer is probably involved in stabilizing broken DNA ends and bringing them together. The assembly of the DNA-PK complex to DNA ends is required for the NHEJ ligation step. The XRCC5-XRRC6 dimer probably also acts as a 5'-deoxyribose-5-phosphate lyase (5'-dRP lyase), by catalyzing the beta-elimination of the 5' deoxyribose-5-phosphate at an abasic site near double-strand breaks. XRCC5 probably acts as the catalytic subunit of 5'-dRP activity, and allows to 'clean' the termini of abasic sites, a class of nucleotide damage commonly associated with strand breaks, before such broken ends can be joined. The XRCC5-XRRC6 dimer together with APEX1 acts as a negative regulator of transcription. In association with NAA15, the XRCC5-XRRC6 dimer binds to the osteocalcin promoter and activates osteocalcin expression. As part of the DNA-PK complex, involved in the early steps of ribosome assembly by promoting the processing of precursor rRNA into mature 18S rRNA in the small-subunit processome. Binding to U3 small nucleolar RNA, recruits PRKDC and XRCC5/Ku86 to the small-subunit processome. Plays a role in the regulation of DNA virus-mediated innate immune response by assembling into the HDP-RNP complex, a complex that serves as a platform for IRF3 phosphorylation and subsequent innate immune response activation through the cGAS-STING pathway. The sequence is that of X-ray repair cross-complementing protein 5 (Xrcc5) from Mus musculus (Mouse).